The chain runs to 298 residues: Acetylglutamate kinase (298 aa).

Residues 66–67 (GG), Arg-88, and Asn-193 contribute to the substrate site.

It belongs to the acetylglutamate kinase family. ArgB subfamily.

Its subcellular location is the cytoplasm. It carries out the reaction N-acetyl-L-glutamate + ATP = N-acetyl-L-glutamyl 5-phosphate + ADP. Its pathway is amino-acid biosynthesis; L-arginine biosynthesis; N(2)-acetyl-L-ornithine from L-glutamate: step 2/4. Its function is as follows. Catalyzes the ATP-dependent phosphorylation of N-acetyl-L-glutamate. The protein is Acetylglutamate kinase of Methanosphaera stadtmanae (strain ATCC 43021 / DSM 3091 / JCM 11832 / MCB-3).